The primary structure comprises 236 residues: Ion-translocating oxidoreductase complex subunit E (236 aa).

The next 6 membrane-spanning stretches (helical) occupy residues 18–38, 39–59, 69–89, 92–112, 128–148, and 182–202; these read ALVQ…ATNA, LGLG…VSAL, IPIY…LINA, FGLY…CIVI, ALDG…LGAL, and PFLL…MLAF. Residues 217–236 form a disordered region; sequence RSAVGQALRGAAPTDNHEQA.

Belongs to the NqrDE/RnfAE family. The complex is composed of six subunits: RnfA, RnfB, RnfC, RnfD, RnfE and RnfG.

The protein resides in the cell inner membrane. In terms of biological role, part of a membrane-bound complex that couples electron transfer with translocation of ions across the membrane. The polypeptide is Ion-translocating oxidoreductase complex subunit E (Edwardsiella ictaluri (strain 93-146)).